A 225-amino-acid polypeptide reads, in one-letter code: Ribonuclease 3 (225 aa).

The region spanning 4-133 is the RNase III domain; that stretch reads FEKLEKLLGY…LIAAIYLDSN (130 aa). E46 contacts Mg(2+). D50 is a catalytic residue. Residues N119 and E122 each contribute to the Mg(2+) site. The active site involves E122. Positions 158–225 constitute a DRBM domain; sequence DPKTALQEWA…AARKLLHKLK (68 aa).

It belongs to the ribonuclease III family. Homodimer. Mg(2+) serves as cofactor.

It is found in the cytoplasm. It carries out the reaction Endonucleolytic cleavage to 5'-phosphomonoester.. Its function is as follows. Digests double-stranded RNA. Involved in the processing of primary rRNA transcript to yield the immediate precursors to the large and small rRNAs (23S and 16S). Processes some mRNAs, and tRNAs when they are encoded in the rRNA operon. Processes pre-crRNA and tracrRNA of type II CRISPR loci if present in the organism. This is Ribonuclease 3 from Rickettsia felis (strain ATCC VR-1525 / URRWXCal2) (Rickettsia azadi).